A 76-amino-acid polypeptide reads, in one-letter code: DNA gyrase inhibitor YacG (76 aa).

4 residues coordinate Zn(2+): Cys20, Cys23, Cys39, and Cys43. Residues 54–76 (EEKSIPGAPDLSDSDGWSDDMGY) are disordered. A compositionally biased stretch (acidic residues) spans 65–76 (SDSDGWSDDMGY).

The protein belongs to the DNA gyrase inhibitor YacG family. In terms of assembly, interacts with GyrB. The cofactor is Zn(2+).

Inhibits all the catalytic activities of DNA gyrase by preventing its interaction with DNA. Acts by binding directly to the C-terminal domain of GyrB, which probably disrupts DNA binding by the gyrase. The chain is DNA gyrase inhibitor YacG from Photobacterium profundum (strain SS9).